The sequence spans 116 residues: Small ribosomal subunit protein bS16 (116 aa).

Residues 88 to 116 (RNNPKAAVPGKRMAELAKKKADRAAASAE) are disordered. A compositionally biased stretch (basic and acidic residues) spans 99–110 (RMAELAKKKADR).

It belongs to the bacterial ribosomal protein bS16 family.

This Cereibacter sphaeroides (strain ATCC 17029 / ATH 2.4.9) (Rhodobacter sphaeroides) protein is Small ribosomal subunit protein bS16.